Reading from the N-terminus, the 649-residue chain is 1-deoxy-D-xylulose-5-phosphate synthase (649 aa).

Residues histidine 73 and 114–116 (SHA) each bind thiamine diphosphate. Aspartate 145 lines the Mg(2+) pocket. Residues 146 to 147 (GA), asparagine 175, tyrosine 286, and glutamate 367 contribute to the thiamine diphosphate site. Asparagine 175 contributes to the Mg(2+) binding site.

It belongs to the transketolase family. DXPS subfamily. Homodimer. Mg(2+) serves as cofactor. The cofactor is thiamine diphosphate.

It catalyses the reaction D-glyceraldehyde 3-phosphate + pyruvate + H(+) = 1-deoxy-D-xylulose 5-phosphate + CO2. It functions in the pathway metabolic intermediate biosynthesis; 1-deoxy-D-xylulose 5-phosphate biosynthesis; 1-deoxy-D-xylulose 5-phosphate from D-glyceraldehyde 3-phosphate and pyruvate: step 1/1. Functionally, catalyzes the acyloin condensation reaction between C atoms 2 and 3 of pyruvate and glyceraldehyde 3-phosphate to yield 1-deoxy-D-xylulose-5-phosphate (DXP). This chain is 1-deoxy-D-xylulose-5-phosphate synthase, found in Rhodococcus jostii (strain RHA1).